Here is a 388-residue protein sequence, read N- to C-terminus: tRNA(Ile)-lysidine synthase (388 aa).

ATP is bound at residue 51-56 (SGGRDS).

It belongs to the tRNA(Ile)-lysidine synthase family.

The protein resides in the cytoplasm. It catalyses the reaction cytidine(34) in tRNA(Ile2) + L-lysine + ATP = lysidine(34) in tRNA(Ile2) + AMP + diphosphate + H(+). In terms of biological role, ligates lysine onto the cytidine present at position 34 of the AUA codon-specific tRNA(Ile) that contains the anticodon CAU, in an ATP-dependent manner. Cytidine is converted to lysidine, thus changing the amino acid specificity of the tRNA from methionine to isoleucine. This Bifidobacterium longum (strain NCC 2705) protein is tRNA(Ile)-lysidine synthase.